A 62-amino-acid polypeptide reads, in one-letter code: Cuticle protein 6.4 (62 aa).

Its function is as follows. Component of the cuticle of migratory locust which contains more than 100 different structural proteins. The protein is Cuticle protein 6.4 of Locusta migratoria (Migratory locust).